A 384-amino-acid polypeptide reads, in one-letter code: S-adenosylmethionine synthase (384 aa).

His15 serves as a coordination point for ATP. Asp17 lines the Mg(2+) pocket. Residue Glu43 participates in K(+) binding. L-methionine contacts are provided by Glu56 and Gln99. A flexible loop region spans residues 99–109; the sequence is QSPDINQGVDR. ATP contacts are provided by residues 164-166, 230-231, Asp239, 245-246, Ala262, and Lys266; these read DAK, RF, and RK. An L-methionine-binding site is contributed by Asp239. Lys270 lines the L-methionine pocket.

It belongs to the AdoMet synthase family. As to quaternary structure, homotetramer; dimer of dimers. The cofactor is Mg(2+). It depends on K(+) as a cofactor.

Its subcellular location is the cytoplasm. The enzyme catalyses L-methionine + ATP + H2O = S-adenosyl-L-methionine + phosphate + diphosphate. It functions in the pathway amino-acid biosynthesis; S-adenosyl-L-methionine biosynthesis; S-adenosyl-L-methionine from L-methionine: step 1/1. Catalyzes the formation of S-adenosylmethionine (AdoMet) from methionine and ATP. The overall synthetic reaction is composed of two sequential steps, AdoMet formation and the subsequent tripolyphosphate hydrolysis which occurs prior to release of AdoMet from the enzyme. This is S-adenosylmethionine synthase from Yersinia pseudotuberculosis serotype IB (strain PB1/+).